A 108-amino-acid chain; its full sequence is Phosphoribosyl-ATP pyrophosphatase (108 aa).

Belongs to the PRA-PH family.

Its subcellular location is the cytoplasm. It carries out the reaction 1-(5-phospho-beta-D-ribosyl)-ATP + H2O = 1-(5-phospho-beta-D-ribosyl)-5'-AMP + diphosphate + H(+). The protein operates within amino-acid biosynthesis; L-histidine biosynthesis; L-histidine from 5-phospho-alpha-D-ribose 1-diphosphate: step 2/9. The protein is Phosphoribosyl-ATP pyrophosphatase of Pelobacter propionicus (strain DSM 2379 / NBRC 103807 / OttBd1).